Here is a 137-residue protein sequence, read N- to C-terminus: Peptide methionine sulfoxide reductase MsrB (137 aa).

The region spanning 7 to 129 (PDHPATELNE…NSASLSFTDG (123 aa)) is the MsrB domain. Zn(2+) contacts are provided by cysteine 46, cysteine 49, cysteine 95, and cysteine 98. The active-site Nucleophile is the cysteine 118.

This sequence belongs to the MsrB Met sulfoxide reductase family. The cofactor is Zn(2+).

It carries out the reaction L-methionyl-[protein] + [thioredoxin]-disulfide + H2O = L-methionyl-(R)-S-oxide-[protein] + [thioredoxin]-dithiol. This chain is Peptide methionine sulfoxide reductase MsrB, found in Serratia proteamaculans (strain 568).